A 475-amino-acid chain; its full sequence is Glutamate--tRNA ligase 1 (475 aa).

The 'HIGH' region signature appears at Pro11 to Gly21. A 'KMSKS' region motif is present at residues Lys240–Arg244. Lys243 lines the ATP pocket.

Belongs to the class-I aminoacyl-tRNA synthetase family. Glutamate--tRNA ligase type 1 subfamily. In terms of assembly, monomer.

The protein resides in the cytoplasm. The enzyme catalyses tRNA(Glu) + L-glutamate + ATP = L-glutamyl-tRNA(Glu) + AMP + diphosphate. Its function is as follows. Catalyzes the attachment of glutamate to tRNA(Glu) in a two-step reaction: glutamate is first activated by ATP to form Glu-AMP and then transferred to the acceptor end of tRNA(Glu). This is Glutamate--tRNA ligase 1 from Methylobacterium radiotolerans (strain ATCC 27329 / DSM 1819 / JCM 2831 / NBRC 15690 / NCIMB 10815 / 0-1).